The following is a 930-amino-acid chain: Isoleucine--tRNA ligase (930 aa).

The 'HIGH' region motif lies at 57–67 (PYANGNIHVGH). An L-isoleucyl-5'-AMP-binding site is contributed by Glu-554. A 'KMSKS' region motif is present at residues 595 to 599 (KMSKS). Position 598 (Lys-598) interacts with ATP. Cys-888, Cys-891, Cys-908, and Cys-911 together coordinate Zn(2+).

The protein belongs to the class-I aminoacyl-tRNA synthetase family. IleS type 1 subfamily. Monomer. Zn(2+) serves as cofactor.

The protein localises to the cytoplasm. It catalyses the reaction tRNA(Ile) + L-isoleucine + ATP = L-isoleucyl-tRNA(Ile) + AMP + diphosphate. Functionally, catalyzes the attachment of isoleucine to tRNA(Ile). As IleRS can inadvertently accommodate and process structurally similar amino acids such as valine, to avoid such errors it has two additional distinct tRNA(Ile)-dependent editing activities. One activity is designated as 'pretransfer' editing and involves the hydrolysis of activated Val-AMP. The other activity is designated 'posttransfer' editing and involves deacylation of mischarged Val-tRNA(Ile). In Streptococcus pneumoniae (strain Taiwan19F-14), this protein is Isoleucine--tRNA ligase.